A 274-amino-acid chain; its full sequence is Formamidopyrimidine-DNA glycosylase (274 aa).

Pro-2 serves as the catalytic Schiff-base intermediate with DNA. Glu-3 (proton donor) is an active-site residue. Residue Lys-59 is the Proton donor; for beta-elimination activity of the active site. DNA contacts are provided by His-93, Arg-112, and Lys-153. Residues 238–272 (QVHTKFNKPCPNCGELIQKIKLGGRGTYFCKKCQQ) form an FPG-type zinc finger. The active-site Proton donor; for delta-elimination activity is Arg-262.

The protein belongs to the FPG family. Monomer. The cofactor is Zn(2+).

The enzyme catalyses Hydrolysis of DNA containing ring-opened 7-methylguanine residues, releasing 2,6-diamino-4-hydroxy-5-(N-methyl)formamidopyrimidine.. It carries out the reaction 2'-deoxyribonucleotide-(2'-deoxyribose 5'-phosphate)-2'-deoxyribonucleotide-DNA = a 3'-end 2'-deoxyribonucleotide-(2,3-dehydro-2,3-deoxyribose 5'-phosphate)-DNA + a 5'-end 5'-phospho-2'-deoxyribonucleoside-DNA + H(+). Involved in base excision repair of DNA damaged by oxidation or by mutagenic agents. Acts as a DNA glycosylase that recognizes and removes damaged bases. Has a preference for oxidized purines, such as 7,8-dihydro-8-oxoguanine (8-oxoG). Has AP (apurinic/apyrimidinic) lyase activity and introduces nicks in the DNA strand. Cleaves the DNA backbone by beta-delta elimination to generate a single-strand break at the site of the removed base with both 3'- and 5'-phosphates. The protein is Formamidopyrimidine-DNA glycosylase of Mycoplasma mobile (strain ATCC 43663 / 163K / NCTC 11711) (Mesomycoplasma mobile).